Here is a 340-residue protein sequence, read N- to C-terminus: Alcohol dehydrogenase (340 aa).

Zn(2+) is bound by residues C40 and H63.

Belongs to the zinc-containing alcohol dehydrogenase family. Zn(2+) is required as a cofactor.

It carries out the reaction a primary alcohol + NAD(+) = an aldehyde + NADH + H(+). The catalysed reaction is a secondary alcohol + NAD(+) = a ketone + NADH + H(+). This Rhizobium meliloti (strain 1021) (Ensifer meliloti) protein is Alcohol dehydrogenase (adhA).